Here is a 109-residue protein sequence, read N- to C-terminus: Protein GOLVEN 5 (109 aa).

The N-terminal stretch at 1–24 is a signal peptide; that stretch reads MTNITSSFLCLLILLLFCLSFGYS. Positions 25–96 are excised as a propeptide; the sequence is LHGDKDEVLS…EEDDLVAYTA (72 aa). The tract at residues 54-88 is disordered; sequence KKAQVRGRSGQEFSKETTKMMMKKTTKKETNVEEE. A Sulfotyrosine modification is found at Y98. At P106 the chain carries Hydroxyproline.

This sequence belongs to the RGF family. Binds to LRR receptor-like serine/threonine-protein kinases RGI1, RGI2 and RGI3 to trigger their dimerization with SERK proteins and subsequent signaling. In terms of tissue distribution, expressed in root tips.

It is found in the secreted. Functionally, signaling peptide (root growth factor) that maintains the postembryonic root stem cell niche in a PIN2-traffic dependent manner. Root growth factor that regulates the pattern of root growth and lateral root development by modulating the length and the number of cortical cells in the root apical meristem (RAM), and the anticlinal asymmetric cell divisions in lateral root initiation cells. Influences the longitudinal growth rate in the primary root in response to phosphate ion (Pi)-deprivation. This chain is Protein GOLVEN 5, found in Arabidopsis thaliana (Mouse-ear cress).